The primary structure comprises 196 residues: uncharacterized protein (196 aa).

This sequence to H.influenzae HI_0431.

This is an uncharacterized protein from Salmonella typhi.